The sequence spans 175 residues: MMYIVFIMSVLYVVGFIGFSSKPSPVYGGMSLVVSGGLGCGIIMGSGGSFLGLVVFLVYLGGMMVVFGYTIAMATEEYPETWGSNVVVLGAFLVGLLMEVFMIMWLFSGEHELVGFYFGGLEDLMVLGEGGFEYVREDYSGGASLYSYGFWFLAMAGWMLFVSIFIAIEVTRKRY.

6 helical membrane passes run 1 to 21 (MMYIVFIMSVLYVVGFIGFSS), 25 to 45 (PVYGGMSLVVSGGLGCGIIMG), 51 to 71 (LGLVVFLVYLGGMMVVFGYTI), 87 to 107 (VVLGAFLVGLLMEVFMIMWLF), 112 to 132 (ELVGFYFGGLEDLMVLGEGGF), and 148 to 168 (YGFWFLAMAGWMLFVSIFIAI).

Belongs to the complex I subunit 6 family. Core subunit of respiratory chain NADH dehydrogenase (Complex I) which is composed of 45 different subunits.

It localises to the mitochondrion inner membrane. It catalyses the reaction a ubiquinone + NADH + 5 H(+)(in) = a ubiquinol + NAD(+) + 4 H(+)(out). In terms of biological role, core subunit of the mitochondrial membrane respiratory chain NADH dehydrogenase (Complex I) which catalyzes electron transfer from NADH through the respiratory chain, using ubiquinone as an electron acceptor. Essential for the catalytic activity and assembly of complex I. The sequence is that of NADH-ubiquinone oxidoreductase chain 6 (MT-ND6) from Loxodonta africana (African elephant).